The sequence spans 325 residues: Tetraacyldisaccharide 4'-kinase (325 aa).

51–58 (VVGGAGKT) is an ATP binding site.

It belongs to the LpxK family.

It carries out the reaction a lipid A disaccharide + ATP = a lipid IVA + ADP + H(+). Its pathway is glycolipid biosynthesis; lipid IV(A) biosynthesis; lipid IV(A) from (3R)-3-hydroxytetradecanoyl-[acyl-carrier-protein] and UDP-N-acetyl-alpha-D-glucosamine: step 6/6. Transfers the gamma-phosphate of ATP to the 4'-position of a tetraacyldisaccharide 1-phosphate intermediate (termed DS-1-P) to form tetraacyldisaccharide 1,4'-bis-phosphate (lipid IVA). This chain is Tetraacyldisaccharide 4'-kinase, found in Paramagnetospirillum magneticum (strain ATCC 700264 / AMB-1) (Magnetospirillum magneticum).